The chain runs to 329 residues: MSNDGDLNIDNLITRLLEVRGCRPGKPVTMSEAEIRALCHKSREIFLSQPILLELEAPLKICGDIHGQYNDLLRLFEYGGFPPEANYLFLGDYVDRGKQSLETICLLLAYKVKYPENFFLLRGNHECASINRIYGFYDECKRRFSIKLWKTFTDCFNCLPIAALIDEKIFCCHGGLSPDLQNMEQIRRVMRPTDVPDTGLLCDLLWSDPDKDVTGWGENDRGVSFTFGPDVVAKFLNRHDLDLICRAHQVVEDGYEFFAKRQLVTLFSAPNYCGEFDNAGGMMSVDETLMCSFQILKPSEKKAKYQYQGMNSGRPAVGGGRPGTTAGKK.

4 residues coordinate Mn(2+): Asp64, His66, Asp92, and Asn124. His125 serves as the catalytic Proton donor. Mn(2+)-binding residues include His173 and His248. The segment at 309–329 is disordered; that stretch reads GMNSGRPAVGGGRPGTTAGKK.

Belongs to the PPP phosphatase family. PP-1 subfamily. Interacts with lab-1; the interaction is direct. Interacts with knl-1; the interaction is direct. It depends on Mn(2+) as a cofactor.

It carries out the reaction O-phospho-L-seryl-[protein] + H2O = L-seryl-[protein] + phosphate. It catalyses the reaction O-phospho-L-threonyl-[protein] + H2O = L-threonyl-[protein] + phosphate. Serine/threonine-protein phosphatase which antagonizes the function of air-2 in the regulation of chromosome cohesion. Dephosphorylates histone H3 at 'Ser-10'. Dephosphorylates translation initiation factor eIF2alpha. Involved in the activation of chloride channel clh-3 during cell swelling and meiotic maturation. This Caenorhabditis briggsae protein is Serine/threonine-protein phosphatase PP1-alpha (gsp-1).